The chain runs to 80 residues: Putative membrane protein insertion efficiency factor (80 aa).

A disordered region spans residues 61-80 (KTGKDPVPDHFSLKRNQEGE). Over residues 62 to 80 (TGKDPVPDHFSLKRNQEGE) the composition is skewed to basic and acidic residues.

The protein belongs to the UPF0161 family.

It localises to the cell membrane. Could be involved in insertion of integral membrane proteins into the membrane. The polypeptide is Putative membrane protein insertion efficiency factor (Streptococcus pneumoniae serotype 2 (strain D39 / NCTC 7466)).